The sequence spans 434 residues: Na(+)/H(+) antiporter NhaA 1 (434 aa).

Transmembrane regions (helical) follow at residues 34–54, 73–93, 111–131, 141–161, 171–191, 194–214, 233–253, 278–298, 313–333, 346–366, and 380–400; these read GLLL…PWSA, LTLG…VAGL, ALPV…YVLW, GWAI…AVIS, FLLT…ALFY, ELHL…ALLV, VLVH…GFAV, SAGL…VGGF, VVTG…WLLA, WVDV…SLLI, and HVKV…TGVL.

It belongs to the NhaA Na(+)/H(+) (TC 2.A.33) antiporter family.

The protein resides in the cell membrane. It catalyses the reaction Na(+)(in) + 2 H(+)(out) = Na(+)(out) + 2 H(+)(in). Functionally, na(+)/H(+) antiporter that extrudes sodium in exchange for external protons. The chain is Na(+)/H(+) antiporter NhaA 1 from Nocardioides sp. (strain ATCC BAA-499 / JS614).